The sequence spans 776 residues: Glucocorticoid receptor (776 aa).

Disordered stretches follow at residues 1-25 (MDPK…YNDK), 47-86 (SCPT…PQPD), and 394-415 (SSPG…STGP). The interval 1–419 (MDPKDLLKPS…STSTGPPPKL (419 aa)) is modulating. Over residues 47–83 (SCPTSTASQSNTRQQQHFQKQLTATGDSTNGLNNNVP) the composition is skewed to polar residues. Residues 403 to 413 (SPSPSTSSTST) show a composition bias toward low complexity. 2 NR C4-type zinc fingers span residues 420 to 440 (CLVC…CGSC) and 456 to 480 (CAGR…YRKC). A DNA-binding region (nuclear receptor) is located at residues 420–485 (CLVCSDEASG…RYRKCLQAGM (66 aa)). A hinge region spans residues 486 to 522 (NLEARKTKKKIKGIQQSTTATARESPETSMTRTLVPA). The 235-residue stretch at 523 to 757 (SVAQLTPTLI…FPDMLSEIIS (235 aa)) folds into the NR LBD domain.

This sequence belongs to the nuclear hormone receptor family. NR3 subfamily. As to quaternary structure, heteromultimeric cytoplasmic complex with HSP90. Upon ligand binding the complex undergoes a conformation change and moves to the nucleus, where it dissociates. Binds to DNA as a homodimer, and as heterodimer with NR3C2. Interaction with numerous other transcription factors modulates transcription activation. As to expression, expressed in liver with relative abundance.

It is found in the cytoplasm. It localises to the nucleus. Its subcellular location is the mitochondrion. The protein resides in the cytoskeleton. The protein localises to the spindle. It is found in the microtubule organizing center. It localises to the centrosome. Its function is as follows. Receptor for glucocorticoids (GC). Has a dual mode of action: as a transcription factor that binds to glucocorticoid response elements (GRE), both for nuclear and mitochondrial DNA, and as a modulator of other transcription factors. Affects inflammatory responses, cellular proliferation and differentiation in target tissues. Involved in chromatin remodeling. Plays a role in rapid mRNA degradation by binding to the 5' UTR of target mRNAs and interacting with PNRC2 in a ligand-dependent manner which recruits the RNA helicase UPF1 and the mRNA-decapping enzyme DCP1A, leading to RNA decay. Could act as a coactivator for STAT5-dependent transcription upon growth hormone (GH) stimulation and could reveal an essential role of hepatic GR in the control of body growth. Mediates glucocorticoid-induced apoptosis. Promotes accurate chromosome segregation during mitosis. May act as a tumor suppressor. May play a negative role in adipogenesis through the regulation of lipolytic and antilipogenic gene expression. In Xenopus laevis (African clawed frog), this protein is Glucocorticoid receptor (nr3c1).